The sequence spans 273 residues: Phosphate import ATP-binding protein PstB (273 aa).

In terms of domain architecture, ABC transporter spans 17–259; that stretch reads LSAENLSIFY…DKTNNIFQNP (243 aa). 49–56 lines the ATP pocket; sequence GPSGCGKS.

Belongs to the ABC transporter superfamily. Phosphate importer (TC 3.A.1.7) family. In terms of assembly, the complex is composed of two ATP-binding proteins (PstB), two transmembrane proteins (PstC and PstA) and a solute-binding protein (PstS).

The protein resides in the cell inner membrane. It catalyses the reaction phosphate(out) + ATP + H2O = ADP + 2 phosphate(in) + H(+). Functionally, part of the ABC transporter complex PstSACB involved in phosphate import. Responsible for energy coupling to the transport system. In Trichodesmium erythraeum (strain IMS101), this protein is Phosphate import ATP-binding protein PstB.